We begin with the raw amino-acid sequence, 37 residues long: Large ribosomal subunit protein bL36c (37 aa).

The protein belongs to the bacterial ribosomal protein bL36 family.

It is found in the plastid. The protein resides in the chloroplast. The protein is Large ribosomal subunit protein bL36c of Vitis vinifera (Grape).